A 287-amino-acid polypeptide reads, in one-letter code: Probable endonuclease 4 (287 aa).

Zn(2+) is bound by residues His69, His109, Glu144, Asp178, His181, His215, Asp228, His230, and Glu260.

The protein belongs to the AP endonuclease 2 family. Requires Zn(2+) as cofactor.

It carries out the reaction Endonucleolytic cleavage to 5'-phosphooligonucleotide end-products.. Its function is as follows. Endonuclease IV plays a role in DNA repair. It cleaves phosphodiester bonds at apurinic or apyrimidinic (AP) sites, generating a 3'-hydroxyl group and a 5'-terminal sugar phosphate. This is Probable endonuclease 4 from Thermotoga petrophila (strain ATCC BAA-488 / DSM 13995 / JCM 10881 / RKU-1).